We begin with the raw amino-acid sequence, 91 residues long: Cell division topological specificity factor (91 aa).

This sequence belongs to the MinE family.

Prevents the cell division inhibition by proteins MinC and MinD at internal division sites while permitting inhibition at polar sites. This ensures cell division at the proper site by restricting the formation of a division septum at the midpoint of the long axis of the cell. This chain is Cell division topological specificity factor, found in Chloroflexus aggregans (strain MD-66 / DSM 9485).